We begin with the raw amino-acid sequence, 518 residues long: Glutamate--cysteine ligase (518 aa).

This sequence belongs to the glutamate--cysteine ligase type 1 family. Type 1 subfamily.

The enzyme catalyses L-cysteine + L-glutamate + ATP = gamma-L-glutamyl-L-cysteine + ADP + phosphate + H(+). It participates in sulfur metabolism; glutathione biosynthesis; glutathione from L-cysteine and L-glutamate: step 1/2. This is Glutamate--cysteine ligase from Escherichia coli O157:H7.